The primary structure comprises 135 residues: Small ribosomal subunit protein uS12 (135 aa).

Residue Asp89 is modified to 3-methylthioaspartic acid. The interval 114–135 (RSRYGAKKGAAKQAAAAKSKKK) is disordered. Low complexity predominate over residues 124–135 (AKQAAAAKSKKK).

This sequence belongs to the universal ribosomal protein uS12 family. As to quaternary structure, part of the 30S ribosomal subunit. Contacts proteins S8 and S17. May interact with IF1 in the 30S initiation complex.

Functionally, with S4 and S5 plays an important role in translational accuracy. Interacts with and stabilizes bases of the 16S rRNA that are involved in tRNA selection in the A site and with the mRNA backbone. Located at the interface of the 30S and 50S subunits, it traverses the body of the 30S subunit contacting proteins on the other side and probably holding the rRNA structure together. The combined cluster of proteins S8, S12 and S17 appears to hold together the shoulder and platform of the 30S subunit. The protein is Small ribosomal subunit protein uS12 of Amoebophilus asiaticus (strain 5a2).